Here is a 396-residue protein sequence, read N- to C-terminus: KiSS-1 receptor (396 aa).

Residues 1–43 (MATEATLAPNVTWWAPSNASGCPGCGVNASDDPGSAPRPLDAW) lie on the Extracellular side of the membrane. N10, N18, and N28 each carry an N-linked (GlcNAc...) asparagine glycan. A helical transmembrane segment spans residues 44-66 (LVPLFFATLMLLGLVGNSLVIYV). The Cytoplasmic portion of the chain corresponds to 67 to 78 (ICRHKHMQTVTN). A helical membrane pass occupies residues 79–101 (FYIANLAATDVTFLLCCVPFTAL). Residues 102–116 (LYPLPAWVLGDFMCK) are Extracellular-facing. C115 and C191 form a disulfide bridge. Residues 117 to 138 (FVNYIQQVSVQATCATLTAMSV) traverse the membrane as a helical segment. Topologically, residues 139 to 157 (DRWYVTVFPLRALHRRTPR) are cytoplasmic. A helical transmembrane segment spans residues 158 to 180 (LALAVSLSIWVGSAAVSAPVLAL). The Extracellular segment spans residues 181 to 203 (HRLSPGPRTYCSEAFPSRALERA). Residues 204–224 (FALYNLLALYLLPLLATCACY) traverse the membrane as a helical segment. The Cytoplasmic portion of the chain corresponds to 225 to 260 (GAMLRHLGRAAVRPAPTDGALQGQLLAQRAGAVRTK). A helical transmembrane segment spans residues 261 to 283 (VSRLVAAVVLLFAACWGPIQLFL). Over 284–305 (VLQALGPSGAWHPRSYAAYAVK) the chain is Extracellular. The chain crosses the membrane as a helical span at residues 306 to 330 (IWAHCMSYSNSALNPLLYAFLGSHF). The Cytoplasmic segment spans residues 331 to 396 (RQAFCRVCPC…CAQSERTASL (66 aa)). The interval 349-396 (HTSAHSDRAATHTVPHSRAAHPVRIRSPEPGNPVVRSPCAQSERTASL) is disordered. Residues 387 to 396 (CAQSERTASL) show a composition bias toward polar residues.

Belongs to the G-protein coupled receptor 1 family. Highest level in the heart and 15- and 17-day embryos. Low level in other tissues. Colocalized with gonadotropin-releasing hormone (GnRH) neurons in the hypothalamus.

It is found in the cell membrane. Functionally, receptor for metastin (kisspeptin-52 or kp-52), a C-terminally amidated peptide of KiSS1. KiSS1 is a metastasis suppressor protein. Activation of the receptor inhibits cell proliferation and cell migration, key characteristics of tumor metastasis. The receptor is essential for normal gonadotropin-released hormone physiology and for puberty. The hypothalamic KiSS1/KISS1R system is a pivotal factor in central regulation of the gonadotropic axis at puberty and in adulthood. Analysis of the transduction pathways activated by the receptor identifies coupling to phospholipase C and intracellular calcium release through pertussis toxin-insensitive G(q) proteins. The protein is KiSS-1 receptor (Kiss1r) of Mus musculus (Mouse).